Reading from the N-terminus, the 218-residue chain is Albicidin resistance protein (218 aa).

It is found in the periplasm. Functionally, albicidin resistance protein binds to form a complex without antibiotic activity but without catalyzing any further chemical modifications to albicidin. The sequence is that of Albicidin resistance protein from Klebsiella oxytoca.